Here is a 194-residue protein sequence, read N- to C-terminus: Holliday junction branch migration complex subunit RuvA (194 aa).

The interval 1 to 64 (MISRLTGKLV…EDAHLLFGFA (64 aa)) is domain I. The domain II stretch occupies residues 65 to 143 (TAEERKTFRQ…AHAVTDGLFA (79 aa)). A flexible linker region spans residues 144–147 (AAPA). Positions 147 to 194 (AADETEDIVGTLLALGYSEREAKAAVKGVPKGTDVGEGVRLALKNLLK) are domain III.

It belongs to the RuvA family. Homotetramer. Forms an RuvA(8)-RuvB(12)-Holliday junction (HJ) complex. HJ DNA is sandwiched between 2 RuvA tetramers; dsDNA enters through RuvA and exits via RuvB. An RuvB hexamer assembles on each DNA strand where it exits the tetramer. Each RuvB hexamer is contacted by two RuvA subunits (via domain III) on 2 adjacent RuvB subunits; this complex drives branch migration. In the full resolvosome a probable DNA-RuvA(4)-RuvB(12)-RuvC(2) complex forms which resolves the HJ.

The protein localises to the cytoplasm. Functionally, the RuvA-RuvB-RuvC complex processes Holliday junction (HJ) DNA during genetic recombination and DNA repair, while the RuvA-RuvB complex plays an important role in the rescue of blocked DNA replication forks via replication fork reversal (RFR). RuvA specifically binds to HJ cruciform DNA, conferring on it an open structure. The RuvB hexamer acts as an ATP-dependent pump, pulling dsDNA into and through the RuvAB complex. HJ branch migration allows RuvC to scan DNA until it finds its consensus sequence, where it cleaves and resolves the cruciform DNA. This is Holliday junction branch migration complex subunit RuvA from Neisseria meningitidis serogroup C / serotype 2a (strain ATCC 700532 / DSM 15464 / FAM18).